Consider the following 692-residue polypeptide: UvrABC system protein C (692 aa).

A GIY-YIG domain is found at 16–95 (ETPGVYRFRD…IKEFDPRFNV (80 aa)). One can recognise a UVR domain in the interval 208 to 243 (GRYLRRLEREMRAAAEAQEYERAARLRDDIGALRRA). The disordered stretch occupies residues 492–511 (GELEEYPGAPTGDDEAPETG).

It belongs to the UvrC family. As to quaternary structure, interacts with UvrB in an incision complex.

Its subcellular location is the cytoplasm. Its function is as follows. The UvrABC repair system catalyzes the recognition and processing of DNA lesions. UvrC both incises the 5' and 3' sides of the lesion. The N-terminal half is responsible for the 3' incision and the C-terminal half is responsible for the 5' incision. This Parafrankia sp. (strain EAN1pec) protein is UvrABC system protein C.